Reading from the N-terminus, the 424-residue chain is UPF0597 protein Sputw3181_2955 (424 aa).

It belongs to the UPF0597 family.

The protein is UPF0597 protein Sputw3181_2955 of Shewanella sp. (strain W3-18-1).